The chain runs to 392 residues: Fasciculation and elongation protein zeta-1 (392 aa).

Positions 1-37 (MEAPLVSLDEEFEDLRPSCSEDPEEKPQCFYGSSPHH) are disordered. A Phosphoserine modification is found at S58. A disordered region spans residues 175-198 (MQNSPDPEEEEEVLEEEDGGETSS). A compositionally biased stretch (acidic residues) spans 180 to 194 (DPEEEEEVLEEEDGG). Residues 230–298 (SELTELLDQV…KKRRKEKGLS (69 aa)) are a coiled coil. S298 and S316 each carry phosphoserine.

The protein belongs to the zygin family. In terms of assembly, homodimer; disulfide-linked. May form heterodimers with FEZ2. Interacts with the NH2-terminal variable region (V1) of PKC zeta and weakly with that of PKC epsilon. Interacts with UBE4B. Interacts with SAP30L. Interacts with SCOC and ULK1; SCOC interferes with ULK1-binding to FEZ1. Directly interacts with SCOC and UVRAG. Stabilizes the interaction between SCOC and UVRAG during amino acid starvation. Post-translationally, phosphorylated by protein kinase C zeta; which enhances interaction with UBE4B and polyubiquitination. Polyubiquitinated in a UBE4B-dependent manner; which does not lead to proteasomal degradation and may be important for neurogenic activity. Polyubiquitin linkage seems to be mainly through Lys-26. Mainly expressed in brain.

The protein localises to the cytoplasm. It localises to the cytoskeleton. It is found in the microtubule organizing center. Its subcellular location is the centrosome. The protein resides in the cell membrane. In terms of biological role, may be involved in axonal outgrowth as component of the network of molecules that regulate cellular morphology and axon guidance machinery. Able to restore partial locomotion and axonal fasciculation to C.elegans unc-76 mutants in germline transformation experiments. May participate in the transport of mitochondria and other cargos along microtubules. In Homo sapiens (Human), this protein is Fasciculation and elongation protein zeta-1 (FEZ1).